The sequence spans 491 residues: Cytochrome P450 2B2 (491 aa).

Position 128 is a phosphoserine; by PKA (S128). Residue C436 coordinates heme.

This sequence belongs to the cytochrome P450 family. The cofactor is heme. In terms of processing, phosphorylation is accompanied by a decrease in enzyme activity.

The protein resides in the endoplasmic reticulum membrane. It is found in the microsome membrane. It carries out the reaction an organic molecule + reduced [NADPH--hemoprotein reductase] + O2 = an alcohol + oxidized [NADPH--hemoprotein reductase] + H2O + H(+). Its function is as follows. Cytochromes P450 are a group of heme-thiolate monooxygenases. In liver microsomes, this enzyme is involved in an NADPH-dependent electron transport pathway. It oxidizes a variety of structurally unrelated compounds, including steroids, fatty acids, and xenobiotics. This Rattus norvegicus (Rat) protein is Cytochrome P450 2B2 (Cyp2b2).